The chain runs to 199 residues: Large ribosomal subunit protein eL13B (199 aa).

Threonine 144 and threonine 152 each carry phosphothreonine.

This sequence belongs to the eukaryotic ribosomal protein eL13 family. In terms of assembly, component of the large ribosomal subunit (LSU). Mature yeast ribosomes consist of a small (40S) and a large (60S) subunit. The 40S small subunit contains 1 molecule of ribosomal RNA (18S rRNA) and 33 different proteins (encoded by 57 genes). The large 60S subunit contains 3 rRNA molecules (25S, 5.8S and 5S rRNA) and 46 different proteins (encoded by 81 genes).

The protein localises to the cytoplasm. In terms of biological role, component of the ribosome, a large ribonucleoprotein complex responsible for the synthesis of proteins in the cell. The small ribosomal subunit (SSU) binds messenger RNAs (mRNAs) and translates the encoded message by selecting cognate aminoacyl-transfer RNA (tRNA) molecules. The large subunit (LSU) contains the ribosomal catalytic site termed the peptidyl transferase center (PTC), which catalyzes the formation of peptide bonds, thereby polymerizing the amino acids delivered by tRNAs into a polypeptide chain. The nascent polypeptides leave the ribosome through a tunnel in the LSU and interact with protein factors that function in enzymatic processing, targeting, and the membrane insertion of nascent chains at the exit of the ribosomal tunnel. The sequence is that of Large ribosomal subunit protein eL13B from Saccharomyces cerevisiae (strain ATCC 204508 / S288c) (Baker's yeast).